The primary structure comprises 291 residues: MEEGLIDRLLETLWLDRRLNQNTLNGYRRDLEKIARRLSQSGRMLKDADEADLAAAVYVDGEQRSSQARALSACKRLYIWMEREGIRTDNPTRLLKPPKIDKNIPTLITEQQISRLLAAPDTDTPHGLRDKALLELMYATGLRVSEAVGLNFGNVDLDRGCITALGKGDKQRMVPMGQESAYWVGRYYTEARPALLKGRSCDALFVSQKKTGISRQLAWMIVKEYASQAGIGHISPHSLRHAFATHLVQHGLDLRVVQDMLGHADLNTTQIYTHVANVWLQGVVKEHHSRN.

Residues 1 to 82 form the Core-binding (CB) domain; that stretch reads MEEGLIDRLL…ACKRLYIWME (82 aa). The region spanning 103 to 285 is the Tyr recombinase domain; it reads NIPTLITEQQ…ANVWLQGVVK (183 aa). Active-site residues include R143, K167, H237, R240, and H263. Y272 acts as the O-(3'-phospho-DNA)-tyrosine intermediate in catalysis.

It belongs to the 'phage' integrase family. XerD subfamily. Forms a cyclic heterotetrameric complex composed of two molecules of XerC and two molecules of XerD.

Its subcellular location is the cytoplasm. In terms of biological role, site-specific tyrosine recombinase, which acts by catalyzing the cutting and rejoining of the recombining DNA molecules. The XerC-XerD complex is essential to convert dimers of the bacterial chromosome into monomers to permit their segregation at cell division. It also contributes to the segregational stability of plasmids. This Neisseria meningitidis serogroup A / serotype 4A (strain DSM 15465 / Z2491) protein is Tyrosine recombinase XerD.